Reading from the N-terminus, the 529-residue chain is Nucleolar protein 58 (529 aa).

Phosphothreonine is present on threonine 34. Serine 109 is modified (phosphoserine). The segment at 155 to 400 (ADKVDTMIVQ…LEARLRTLED (246 aa)) is sufficient for interaction with NOPCHAP1. Residue lysine 157 forms a Glycyl lysine isopeptide (Lys-Gly) (interchain with G-Cter in SUMO2) linkage. The region spanning 282-400 (IAPNVTVMVG…LEARLRTLED (119 aa)) is the Nop domain. Phosphoserine occurs at positions 304 and 351. Residues lysine 353, lysine 411, lysine 415, lysine 422, lysine 426, lysine 441, lysine 444, and lysine 465 each participate in a glycyl lysine isopeptide (Lys-Gly) (interchain with G-Cter in SUMO2) cross-link. A disordered region spans residues 409 to 529 (TGKALAKTEK…KKKKKRENED (121 aa)). The span at 414 to 427 (AKTEKYEHKSEVKT) shows a compositional bias: basic and acidic residues. Residue lysine 467 forms a Glycyl lysine isopeptide (Lys-Gly) (interchain with G-Cter in SUMO); alternate linkage. Residue lysine 467 forms a Glycyl lysine isopeptide (Lys-Gly) (interchain with G-Cter in SUMO1); alternate linkage. Lysine 467 participates in a covalent cross-link: Glycyl lysine isopeptide (Lys-Gly) (interchain with G-Cter in SUMO2); alternate. Residues 469–481 (EEEEEEKVAEEEE) show a composition bias toward acidic residues. Residue serine 483 is modified to Phosphoserine. Residue lysine 485 forms a Glycyl lysine isopeptide (Lys-Gly) (interchain with G-Cter in SUMO2) linkage. The span at 485–495 (KKKKKRGKKKH) shows a compositional bias: basic residues. A Glycyl lysine isopeptide (Lys-Gly) (interchain with G-Cter in SUMO); alternate cross-link involves residue lysine 497. Lysine 497 participates in a covalent cross-link: Glycyl lysine isopeptide (Lys-Gly) (interchain with G-Cter in SUMO2); alternate. Phosphoserine occurs at positions 502 and 514. A compositionally biased stretch (basic residues) spans 517 to 529 (KKKKKKKKRENED).

It belongs to the NOP5/NOP56 family. As to quaternary structure, core component of box C/D small nucleolar ribonucleoprotein (snoRNP) particles; the core proteins SNU13, NOP56, NOP58 and FBL or FBLL1 assemble stepwise onto the snoRNA. Interacts with NOLC1/Nopp140. Interacts with NOPCHAP1, NUFIP1, RUVBL1 and RUVBL2; NOPCHAP1 bridges the association of NOP58 with RUVBL1:RUVBL2 and NUFIP1. Interacts with PIH1D1. Part of the small subunit (SSU) processome, composed of more than 70 proteins and the RNA chaperone small nucleolar RNA (snoRNA) U3. In terms of processing, sumoylation is essential for high-affinity binding to snoRNAs. In terms of tissue distribution, ubiquitous.

Its subcellular location is the nucleus. The protein localises to the nucleolus. It is found in the nucleoplasm. Required for the biogenesis of box C/D snoRNAs such as U3, U8 and U14 snoRNAs. Part of the small subunit (SSU) processome, first precursor of the small eukaryotic ribosomal subunit. During the assembly of the SSU processome in the nucleolus, many ribosome biogenesis factors, an RNA chaperone and ribosomal proteins associate with the nascent pre-rRNA and work in concert to generate RNA folding, modifications, rearrangements and cleavage as well as targeted degradation of pre-ribosomal RNA by the RNA exosome. Core component of box C/D small nucleolar ribonucleoprotein (snoRNP) complexes that function in methylation of multiple sites on ribosomal RNAs (rRNAs) and messenger RNAs (mRNAs). The chain is Nucleolar protein 58 from Homo sapiens (Human).